A 349-amino-acid polypeptide reads, in one-letter code: Flap endonuclease 1-B (349 aa).

Residues 1–105 (MGIKGLTKLL…GELAKRLARR (105 aa)) are N-domain. A Mg(2+)-binding site is contributed by Asp34. Arg71 is a binding site for DNA. Residues Asp87, Glu159, Glu161, Asp180, and Asp182 each coordinate Mg(2+). The segment at 123-254 (DMEKYSKRTV…QTALKLIRQH (132 aa)) is I-domain. Glu159 contributes to the DNA binding site. Residues Gly232 and Asp234 each contribute to the DNA site. A Mg(2+)-binding site is contributed by Asp234.

It belongs to the XPG/RAD2 endonuclease family. FEN1 subfamily. Interacts with PCNA. Three molecules of FEN1 bind to one PCNA trimer with each molecule binding to one PCNA monomer. PCNA stimulates the nuclease activity without altering cleavage specificity. Requires Mg(2+) as cofactor. Post-translationally, phosphorylated. Phosphorylation upon DNA damage induces relocalization to the nuclear plasma.

The protein localises to the nucleus. The protein resides in the nucleolus. Its subcellular location is the nucleoplasm. It localises to the mitochondrion. Its function is as follows. Structure-specific nuclease with 5'-flap endonuclease and 5'-3' exonuclease activities involved in DNA replication and repair. During DNA replication, cleaves the 5'-overhanging flap structure that is generated by displacement synthesis when DNA polymerase encounters the 5'-end of a downstream Okazaki fragment. It enters the flap from the 5'-end and then tracks to cleave the flap base, leaving a nick for ligation. Also involved in the long patch base excision repair (LP-BER) pathway, by cleaving within the apurinic/apyrimidinic (AP) site-terminated flap. Acts as a genome stabilization factor that prevents flaps from equilibrating into structures that lead to duplications and deletions. Also possesses 5'-3' exonuclease activity on nicked or gapped double-stranded DNA, and exhibits RNase H activity. Also involved in replication and repair of rDNA and in repairing mitochondrial DNA. The chain is Flap endonuclease 1-B from Physcomitrium patens (Spreading-leaved earth moss).